A 627-amino-acid chain; its full sequence is Transketolase-like protein 2 (627 aa).

H39 lines the substrate pocket. Residues S42, H79, and 125–127 each bind thiamine diphosphate; that span reads GSL. D157 contributes to the Mg(2+) binding site. Thiamine diphosphate-binding residues include G158 and N187. Residues N187 and L189 each coordinate Mg(2+). The thiamine diphosphate site is built by K249 and H263. Substrate-binding residues include H263, R323, and S350. Thiamine diphosphate-binding residues include E371 and F397. E371 functions as the Proton donor in the catalytic mechanism. Residues H421 and D429 each contribute to the substrate site. Q433 is a thiamine diphosphate binding site. R479 serves as a coordination point for substrate.

The protein belongs to the transketolase family. Homodimer. The cofactor is Mg(2+). Ca(2+) is required as a cofactor. It depends on Mn(2+) as a cofactor. Requires Co(2+) as cofactor. Thiamine diphosphate serves as cofactor.

The catalysed reaction is D-sedoheptulose 7-phosphate + D-glyceraldehyde 3-phosphate = aldehydo-D-ribose 5-phosphate + D-xylulose 5-phosphate. Its function is as follows. Plays an essential role in total transketolase activity and cell proliferation in cancer cells; after transfection with anti-TKTL1 siRNA, total transketolase activity dramatically decreases and proliferation was significantly inhibited in cancer cells. Plays a pivotal role in carcinogenesis. The polypeptide is Transketolase-like protein 2 (Tktl2) (Mus musculus (Mouse)).